We begin with the raw amino-acid sequence, 396 residues long: Elongation factor Tu 2 (396 aa).

The tr-type G domain occupies 10–206 (KPHCNIGTIG…AVDAYIPQPE (197 aa)). The tract at residues 19–26 (GHVDHGKT) is G1. 19-26 (GHVDHGKT) provides a ligand contact to GTP. Mg(2+) is bound at residue T26. Residues 60–64 (GITIS) are G2. A G3 region spans residues 81–84 (DCPG). GTP contacts are provided by residues 81-85 (DCPGH) and 136-139 (NKCD). The G4 stretch occupies residues 136-139 (NKCD). The G5 stretch occupies residues 174 to 176 (SAL).

Belongs to the TRAFAC class translation factor GTPase superfamily. Classic translation factor GTPase family. EF-Tu/EF-1A subfamily. Monomer.

Its subcellular location is the cytoplasm. The enzyme catalyses GTP + H2O = GDP + phosphate + H(+). Functionally, GTP hydrolase that promotes the GTP-dependent binding of aminoacyl-tRNA to the A-site of ribosomes during protein biosynthesis. The chain is Elongation factor Tu 2 from Rhodopseudomonas palustris (strain BisB5).